A 606-amino-acid polypeptide reads, in one-letter code: NADH-ubiquinone oxidoreductase chain 5 (606 aa).

15 consecutive transmembrane segments (helical) span residues 3–23 (VINL…LPIT), 38–58 (ITKM…LLFL), 87–107 (FFSL…MEFS), 124–144 (LLLF…LQLF), 180–200 (IGDM…NSWE), 216–236 (LLGL…HPWL), 244–264 (TPVS…FTLI), 276–296 (IQTS…ICAL), 304–323 (IIAL…IGIN), 328–350 (AFTH…GSII), 369–389 (MPIT…MPFL), 404–424 (MSYI…MTAS), 460–480 (LILG…PHTT), 483–503 (MTMP…GFTV), and 586–606 (LMKL…LITL).

Belongs to the complex I subunit 5 family. As to quaternary structure, core subunit of respiratory chain NADH dehydrogenase (Complex I) which is composed of 45 different subunits.

The protein resides in the mitochondrion inner membrane. The enzyme catalyses a ubiquinone + NADH + 5 H(+)(in) = a ubiquinol + NAD(+) + 4 H(+)(out). Core subunit of the mitochondrial membrane respiratory chain NADH dehydrogenase (Complex I) which catalyzes electron transfer from NADH through the respiratory chain, using ubiquinone as an electron acceptor. Essential for the catalytic activity and assembly of complex I. The protein is NADH-ubiquinone oxidoreductase chain 5 (MT-ND5) of Elephas maximus (Indian elephant).